The sequence spans 256 residues: L-tyrosine degradation gene cluster protein hmgX (256 aa).

Belongs to the TTC36 family.

It is found in the cytoplasm. Functionally, part of the L-tyrosine degradation gene cluster that mediates the biosynthesis of the brownish pigment pyomelanin as an alternative melanin. The 4-hydroxyphenylpyruvate dioxygenase hppD catalyzes the conversion of 4-hydroxyphenylpyruvate to homogentisic acid (HGA). The protein hmgX is crucial for this conversion and thus, probably functions as an accessory factor to mediate specific activity of hppD. The homogentisate 1,2-dioxygenase hmgA is then involved in the cleavage of the aromatic ring of HGA and its conversion to 4-maleylacetoacetate. When hmgA activity is lowered by the cell wall integrity (CWI) signaling pathway, HGA accumulates and leads to the production of pyomelanin through benzoquinone acetic acid after oxidation and polymerization. On the opposite, in non-stress conditions, both hppD and hmgA activities are balanced and HGA is degraded into 4-maleylacetoacetate. 4-maleylacetoacetate is further converted to 4-fumarylacetoacetate by the maleylacetoacetate isomerase maiA, which is degraded into fumarate and acetoacetate by the fumarylacetoacetase fahA. In Aspergillus fumigatus (strain ATCC MYA-4609 / CBS 101355 / FGSC A1100 / Af293) (Neosartorya fumigata), this protein is L-tyrosine degradation gene cluster protein hmgX.